Here is a 387-residue protein sequence, read N- to C-terminus: Putative transposase y4pF/y4sB (387 aa).

The protein belongs to the transposase 20 family.

In Sinorhizobium fredii (strain NBRC 101917 / NGR234), this protein is Putative transposase y4pF/y4sB.